The primary structure comprises 417 residues: Serine hydroxymethyltransferase (417 aa).

(6S)-5,6,7,8-tetrahydrofolate is bound by residues leucine 121 and 125–127 (GHL). An N6-(pyridoxal phosphate)lysine modification is found at lysine 229. A (6S)-5,6,7,8-tetrahydrofolate-binding site is contributed by 355 to 357 (SSF).

This sequence belongs to the SHMT family. In terms of assembly, homodimer. Pyridoxal 5'-phosphate serves as cofactor.

It is found in the cytoplasm. The catalysed reaction is (6R)-5,10-methylene-5,6,7,8-tetrahydrofolate + glycine + H2O = (6S)-5,6,7,8-tetrahydrofolate + L-serine. It functions in the pathway one-carbon metabolism; tetrahydrofolate interconversion. It participates in amino-acid biosynthesis; glycine biosynthesis; glycine from L-serine: step 1/1. Functionally, catalyzes the reversible interconversion of serine and glycine with tetrahydrofolate (THF) serving as the one-carbon carrier. This reaction serves as the major source of one-carbon groups required for the biosynthesis of purines, thymidylate, methionine, and other important biomolecules. Also exhibits THF-independent aldolase activity toward beta-hydroxyamino acids, producing glycine and aldehydes, via a retro-aldol mechanism. The sequence is that of Serine hydroxymethyltransferase from Baumannia cicadellinicola subsp. Homalodisca coagulata.